Reading from the N-terminus, the 124-residue chain is MARIAGVDLPREKRIEIALTYIFGIGLSRSKQILRDTGVDPNKRVKDLTDDEVAKIRDYIDKNFKVEGELRAEIARNIKRLIDIRCYRGLRHLRGLPVRGQRTRTNARTRKGPRKTVGVMRKKS.

The disordered stretch occupies residues 99 to 124 (RGQRTRTNARTRKGPRKTVGVMRKKS). Basic residues predominate over residues 101–124 (QRTRTNARTRKGPRKTVGVMRKKS).

It belongs to the universal ribosomal protein uS13 family. As to quaternary structure, part of the 30S ribosomal subunit. Forms a loose heterodimer with protein S19. Forms two bridges to the 50S subunit in the 70S ribosome.

Its function is as follows. Located at the top of the head of the 30S subunit, it contacts several helices of the 16S rRNA. In the 70S ribosome it contacts the 23S rRNA (bridge B1a) and protein L5 of the 50S subunit (bridge B1b), connecting the 2 subunits; these bridges are implicated in subunit movement. Contacts the tRNAs in the A and P-sites. The polypeptide is Small ribosomal subunit protein uS13 (Caldicellulosiruptor saccharolyticus (strain ATCC 43494 / DSM 8903 / Tp8T 6331)).